A 274-amino-acid polypeptide reads, in one-letter code: Large ribosomal subunit protein bL28m (274 aa).

A disordered region spans residues 249 to 274 (SETEEFGLGQEEDLFMKEEPKPTKMA). Basic and acidic residues predominate over residues 262-274 (LFMKEEPKPTKMA).

It belongs to the bacterial ribosomal protein bL28 family. Component of the mitochondrial large ribosomal subunit (mt-LSU). Mature N.crassa 74S mitochondrial ribosomes consist of a small (37S) and a large (54S) subunit. The 37S small subunit contains a 16S ribosomal RNA (16S mt-rRNA) and 32 different proteins. The 54S large subunit contains a 23S rRNA (23S mt-rRNA) and 42 different proteins.

It is found in the mitochondrion. Its function is as follows. Component of the mitochondrial ribosome (mitoribosome), a dedicated translation machinery responsible for the synthesis of mitochondrial genome-encoded proteins, including at least some of the essential transmembrane subunits of the mitochondrial respiratory chain. The mitoribosomes are attached to the mitochondrial inner membrane and translation products are cotranslationally integrated into the membrane. In Neurospora crassa (strain ATCC 24698 / 74-OR23-1A / CBS 708.71 / DSM 1257 / FGSC 987), this protein is Large ribosomal subunit protein bL28m (mrpl24).